The sequence spans 331 residues: Chitin synthase export chaperone (331 aa).

7 helical membrane passes run 52–72, 84–104, 122–142, 150–170, 184–204, 219–239, and 249–269; these read GAASFVHIIALAMTVIMILHI, IITFFYIYMLLTMCSLVIDAG, GLTSALCTSLLVNGFVGFQLY, VWLLRLTSTAMFAISFVISLL, VGMFVVLYILNAICIAVYLIM, LGHIAFGLLVFICGQVLLYAF, and HYLDGLFFTTICNLLAVMMVY.

This sequence belongs to the CHS7 family. Interacts with chs3.

The protein resides in the endoplasmic reticulum membrane. Functionally, chaperone required for the export of the chitin synthase chs3 from the endoplasmic reticulum. The protein is Chitin synthase export chaperone (chs7) of Aspergillus oryzae (strain ATCC 42149 / RIB 40) (Yellow koji mold).